The following is a 231-amino-acid chain: MTADDRIKLEPSWKEALRAEFDQPYMTELRTFLQQERAAGKEIYPPGPMIFNALNSTPLDKVKVVILGQDPYHGPGQAHGLCFSVQPGVPAPPSLVNIYKELKRDLNIDIPNHGYLQSWADQGVLMLNTTMTVERANANAHKDKGWQFFTDRIIEVVSQKQPHLVFMLWGAHAQSKQKLIDATKHLVLTSVHPSPLSAYRGFLGCGHFSRTNKFLEQNGEAPIEWRLPPVV.

Catalysis depends on D70, which acts as the Proton acceptor.

The protein belongs to the uracil-DNA glycosylase (UDG) superfamily. UNG family.

Its subcellular location is the cytoplasm. The enzyme catalyses Hydrolyzes single-stranded DNA or mismatched double-stranded DNA and polynucleotides, releasing free uracil.. Its function is as follows. Excises uracil residues from the DNA which can arise as a result of misincorporation of dUMP residues by DNA polymerase or due to deamination of cytosine. The chain is Uracil-DNA glycosylase from Pseudomonas fluorescens (strain Pf0-1).